The following is a 72-amino-acid chain: Exodeoxyribonuclease 7 small subunit (72 aa).

The protein belongs to the XseB family. In terms of assembly, heterooligomer composed of large and small subunits.

The protein localises to the cytoplasm. The catalysed reaction is Exonucleolytic cleavage in either 5'- to 3'- or 3'- to 5'-direction to yield nucleoside 5'-phosphates.. Functionally, bidirectionally degrades single-stranded DNA into large acid-insoluble oligonucleotides, which are then degraded further into small acid-soluble oligonucleotides. The chain is Exodeoxyribonuclease 7 small subunit from Clostridium kluyveri (strain NBRC 12016).